The chain runs to 394 residues: Small ribosomal subunit protein uS2m (394 aa).

A mitochondrion-targeting transit peptide spans 1-25; sequence MQRHVFARNFRRLSLLRNPSLTKRF.

This sequence belongs to the universal ribosomal protein uS2 family. Component of the mitochondrial small ribosomal subunit (mt-SSU). Mature yeast 74S mitochondrial ribosomes consist of a small (37S) and a large (54S) subunit. The 37S small subunit contains a 15S ribosomal RNA (15S mt-rRNA) and 34 different proteins. The 54S large subunit contains a 21S rRNA (21S mt-rRNA) and 46 different proteins.

It is found in the mitochondrion. In terms of biological role, component of the mitochondrial ribosome (mitoribosome), a dedicated translation machinery responsible for the synthesis of mitochondrial genome-encoded proteins, including at least some of the essential transmembrane subunits of the mitochondrial respiratory chain. The mitoribosomes are attached to the mitochondrial inner membrane and translation products are cotranslationally integrated into the membrane. This is Small ribosomal subunit protein uS2m (MRP4) from Saccharomyces cerevisiae (strain ATCC 204508 / S288c) (Baker's yeast).